Reading from the N-terminus, the 167-residue chain is Large ribosomal subunit protein uL10 (167 aa).

The protein belongs to the universal ribosomal protein uL10 family. As to quaternary structure, part of the ribosomal stalk of the 50S ribosomal subunit. The N-terminus interacts with L11 and the large rRNA to form the base of the stalk. The C-terminus forms an elongated spine to which L12 dimers bind in a sequential fashion forming a multimeric L10(L12)X complex.

Functionally, forms part of the ribosomal stalk, playing a central role in the interaction of the ribosome with GTP-bound translation factors. This is Large ribosomal subunit protein uL10 from Lactiplantibacillus plantarum (strain ATCC BAA-793 / NCIMB 8826 / WCFS1) (Lactobacillus plantarum).